The chain runs to 229 residues: Sodium channel modifier 1 (229 aa).

Phosphoserine is present on S2. The short motif at K4–R20 is the Bipartite nuclear localization signal element. The Matrin-type zinc finger occupies F42 to L74. K67 is covalently cross-linked (Glycyl lysine isopeptide (Lys-Gly) (interchain with G-Cter in SUMO2)). Disordered stretches follow at residues Q80–L105 and R128–R187. Residues G82–Q92 are compositionally biased toward polar residues. The span at I157–E171 shows a compositional bias: basic and acidic residues. A phosphoserine mark is found at S182 and S218. The required for interaction with LUC7L2 stretch occupies residues R187–D229.

Component of the minor spliceosome. Within this complex, interacts with RNF113A, as well as with SF3B1/SF3b155, SF3B2/SF3b145, SF3B3/SF3b130 and CDC5L. May interact with LUC7L2 and SNRNP70.

Its subcellular location is the nucleus. It localises to the nucleoplasm. The protein localises to the nucleus speckle. In terms of biological role, as a component of the minor spliceosome, involved in the splicing of U12-type introns in pre-mRNAs. Plays a role in the regulation of primary cilia length and Hedgehog signaling. The chain is Sodium channel modifier 1 (Scnm1) from Mus musculus (Mouse).